We begin with the raw amino-acid sequence, 331 residues long: MAKMYYDSDCNLKLLEGKTVAVIGYGSQGHAHAQNLKDSGVNVIVGLTPSSARRKQVEADGLKAYDTAEAAKMADIIMILVPDEKQAAMYEESIAQNLEAGNILMFAHGFNINFKQIVPPADVDVIMVAPKGPGHTVRSQYKEGRGVPALIAVEKDASGKAKEYALAYASGIGAGRAGILETTFREETETDLFGEQAVLCGGVTELMKAGFETLVAAGYQPEIAYFECIHEMKLIVDLINQGGFGEMRYSISDTAEYGDYVTGKRIITDETRKEMKKVLKEIQDGKFAANWIIENKAAGRANFISMRRNESEHQLETVGAELRKMMSWLKK.

The KARI N-terminal Rossmann domain maps to A2–T182. NADP(+) is bound by residues Y25–Q28, S51, and D83–Q86. H108 is an active-site residue. NADP(+) is bound at residue G134. The region spanning T183–L329 is the KARI C-terminal knotted domain. Mg(2+) is bound by residues D191, E195, E227, and E231. S252 is a binding site for substrate.

The protein belongs to the ketol-acid reductoisomerase family. Requires Mg(2+) as cofactor.

It catalyses the reaction (2R)-2,3-dihydroxy-3-methylbutanoate + NADP(+) = (2S)-2-acetolactate + NADPH + H(+). It carries out the reaction (2R,3R)-2,3-dihydroxy-3-methylpentanoate + NADP(+) = (S)-2-ethyl-2-hydroxy-3-oxobutanoate + NADPH + H(+). It functions in the pathway amino-acid biosynthesis; L-isoleucine biosynthesis; L-isoleucine from 2-oxobutanoate: step 2/4. The protein operates within amino-acid biosynthesis; L-valine biosynthesis; L-valine from pyruvate: step 2/4. Its function is as follows. Involved in the biosynthesis of branched-chain amino acids (BCAA). Catalyzes an alkyl-migration followed by a ketol-acid reduction of (S)-2-acetolactate (S2AL) to yield (R)-2,3-dihydroxy-isovalerate. In the isomerase reaction, S2AL is rearranged via a Mg-dependent methyl migration to produce 3-hydroxy-3-methyl-2-ketobutyrate (HMKB). In the reductase reaction, this 2-ketoacid undergoes a metal-dependent reduction by NADPH to yield (R)-2,3-dihydroxy-isovalerate. This is Ketol-acid reductoisomerase (NADP(+)) from Ruminiclostridium cellulolyticum (strain ATCC 35319 / DSM 5812 / JCM 6584 / H10) (Clostridium cellulolyticum).